The following is a 530-amino-acid chain: MELEAYIQSLGLGIESYSQSATQFHDEANQSFNIPISTIIKLKEACRELETSKVVAKSLNWSHLLRVISLLWEKDVSLELMKLLANCLRQVPSISVQIVHNESLKQLTTSVFEVRAPKVLSLISTFNDDLERRVVFMRFLFILLSTQTDDICLDMRQVRTQLIQMLKKMWTLNSSPSNNSQDNEMVLTEILRLLFPISKRSYLKEEDEQKILLLVIEIWASSLNNNPNSPLRWHATNALLSFNLQLLSLDQAIYVSEIACQTLQSILISREVEYLEKGLNLCFDIAAKYQNTLPPILAILLSLLSFFNIKQNLSMLLFPTNDDRKQSLQKGKSFRCLLLRLLTIPIVEPIGTYYASLLNELCDGDSQQIARIFGAGYAMGISQHSETMPFPSPLSKAASPVFQKNSRGQENTEENNLAIDPITGSMCTNRNKSQRLELSQEEKEREAERLFYLFQRLEKNSTIQVTNPIQQAVNSGFIDVVFCLIFQMSSESFIYHCYHSFVGPIHILLLMFSTFKFHEILHFIKISKAS.

The helical transmembrane segment at 492-512 (SFIYHCYHSFVGPIHILLLMF) threads the bilayer.

This sequence belongs to the synembryn family.

It is found in the membrane. In terms of biological role, chaperone that specifically binds and folds some, but not all, nascent G alpha proteins prior to G protein heterotrimer formation, promoting their stability and activity. Also acts as a guanine nucleotide exchange factor (GEF) for G alpha proteins by stimulating exchange of bound GDP for free GTP. This chain is Synembryn-like chaperone C3E7.04c, found in Schizosaccharomyces pombe (strain 972 / ATCC 24843) (Fission yeast).